Consider the following 335-residue polypeptide: Meiotic expression up-regulated protein 14 (335 aa).

It localises to the cytoplasm. Its subcellular location is the cytoskeleton. The protein resides in the microtubule organizing center. The protein localises to the spindle pole body. It is found in the nucleus membrane. It localises to the prospore membrane. Its function is as follows. Has a role in nuclear division during meiosis II where it stabilizes the proper segregation of the spindle pole bodies. Also has a role in the formation and extension of the forespore membrane. This is Meiotic expression up-regulated protein 14 (meu14) from Schizosaccharomyces pombe (strain 972 / ATCC 24843) (Fission yeast).